Here is a 167-residue protein sequence, read N- to C-terminus: Crossover junction endodeoxyribonuclease RuvC (167 aa).

Residues D8, E68, and D140 contribute to the active site. Mg(2+) contacts are provided by D8, E68, and D140.

It belongs to the RuvC family. As to quaternary structure, homodimer which binds Holliday junction (HJ) DNA. The HJ becomes 2-fold symmetrical on binding to RuvC with unstacked arms; it has a different conformation from HJ DNA in complex with RuvA. In the full resolvosome a probable DNA-RuvA(4)-RuvB(12)-RuvC(2) complex forms which resolves the HJ. The cofactor is Mg(2+).

It localises to the cytoplasm. It carries out the reaction Endonucleolytic cleavage at a junction such as a reciprocal single-stranded crossover between two homologous DNA duplexes (Holliday junction).. In terms of biological role, the RuvA-RuvB-RuvC complex processes Holliday junction (HJ) DNA during genetic recombination and DNA repair. Endonuclease that resolves HJ intermediates. Cleaves cruciform DNA by making single-stranded nicks across the HJ at symmetrical positions within the homologous arms, yielding a 5'-phosphate and a 3'-hydroxyl group; requires a central core of homology in the junction. The consensus cleavage sequence is 5'-(A/T)TT(C/G)-3'. Cleavage occurs on the 3'-side of the TT dinucleotide at the point of strand exchange. HJ branch migration catalyzed by RuvA-RuvB allows RuvC to scan DNA until it finds its consensus sequence, where it cleaves and resolves the cruciform DNA. The protein is Crossover junction endodeoxyribonuclease RuvC of Sinorhizobium medicae (strain WSM419) (Ensifer medicae).